The chain runs to 331 residues: UDP-GalNAc:beta-1,3-N-acetylgalactosaminyltransferase 1 (331 aa).

Residues 1 to 20 (MAPAVLTALPNRMSLRSLKW) lie on the Cytoplasmic side of the membrane. A helical; Signal-anchor for type II membrane protein transmembrane segment spans residues 21–43 (SLLLLSLLSFLVIWYLSLPHYNV). Residues 44–331 (IERVNWMYFY…VMLRNTTCHY (288 aa)) are Lumenal-facing. 5 N-linked (GlcNAc...) asparagine glycosylation sites follow: Asn72, Asn154, Asn198, Asn212, and Asn326.

The protein belongs to the glycosyltransferase 31 family. Mg(2+) is required as a cofactor. Detected in brain, ovary, kidney, uterus and stomach. In ovary, specifically expressed in follicular granulosa cells and shows particularly strong expression at later stages of follicle development.

The protein resides in the golgi apparatus membrane. It carries out the reaction a globoside Gb3Cer (d18:1(4E)) + UDP-N-acetyl-alpha-D-galactosamine = a globoside Gb4Cer (d18:1(4E)) + UDP + H(+). It functions in the pathway protein modification; protein glycosylation. In terms of biological role, transfers N-acetylgalactosamine onto globotriaosylceramide. Plays a critical role in preimplantation stage embryonic development. This Mus musculus (Mouse) protein is UDP-GalNAc:beta-1,3-N-acetylgalactosaminyltransferase 1.